The following is a 381-amino-acid chain: 1-deoxy-D-xylulose 5-phosphate reductoisomerase (381 aa).

Residues Thr10, Gly11, Ser12, Ile13, Asn38, and Asn121 each coordinate NADPH. Lys122 provides a ligand contact to 1-deoxy-D-xylulose 5-phosphate. Glu123 lines the NADPH pocket. Asp147 contributes to the Mn(2+) binding site. Ser148, Glu149, Ser173, and His196 together coordinate 1-deoxy-D-xylulose 5-phosphate. Glu149 contacts Mn(2+). Gly202 provides a ligand contact to NADPH. Positions 209, 214, 215, and 218 each coordinate 1-deoxy-D-xylulose 5-phosphate. Glu218 lines the Mn(2+) pocket.

This sequence belongs to the DXR family. It depends on Mg(2+) as a cofactor. Mn(2+) is required as a cofactor.

It carries out the reaction 2-C-methyl-D-erythritol 4-phosphate + NADP(+) = 1-deoxy-D-xylulose 5-phosphate + NADPH + H(+). Its pathway is isoprenoid biosynthesis; isopentenyl diphosphate biosynthesis via DXP pathway; isopentenyl diphosphate from 1-deoxy-D-xylulose 5-phosphate: step 1/6. In terms of biological role, catalyzes the NADPH-dependent rearrangement and reduction of 1-deoxy-D-xylulose-5-phosphate (DXP) to 2-C-methyl-D-erythritol 4-phosphate (MEP). The polypeptide is 1-deoxy-D-xylulose 5-phosphate reductoisomerase (Alkaliphilus oremlandii (strain OhILAs) (Clostridium oremlandii (strain OhILAs))).